The sequence spans 312 residues: MALRTSLITTTAPDKTSLPISICIIKFQVMNLLSITISPVGMVLNIIVLWFLGFQICRNAFSAYILNLAVADFLFLCSHSIFSFLIVCKLHYFLFYIRQLLDTVTMFAYVFGLSITTIISIECCLSIMWPIWYHCQRPRHTSAVICVLLWALSLLFPALQMEKCSVLFNTFEYSWCGIINIISGAWLVVLFVVLCGFSLILLLRISCGSQQIPVTRLNVTIALRVLLLLIFGIPFGIFWIVDKWNEENFFVRACGFSHHILYVYCINICVNATIYFLVGSIRHGKFQKMTLKLILQRAIQGTPEEEGGERGP.

Residues 1–31 (MALRTSLITTTAPDKTSLPISICIIKFQVMN) are Extracellular-facing. A helical transmembrane segment spans residues 32–52 (LLSITISPVGMVLNIIVLWFL). Topologically, residues 53-67 (GFQICRNAFSAYILN) are cytoplasmic. The helical transmembrane segment at 68–88 (LAVADFLFLCSHSIFSFLIVC) threads the bilayer. At 89-106 (KLHYFLFYIRQLLDTVTM) the chain is on the extracellular side. Residues 107–127 (FAYVFGLSITTIISIECCLSI) traverse the membrane as a helical segment. Over 128-140 (MWPIWYHCQRPRH) the chain is Cytoplasmic. The chain crosses the membrane as a helical span at residues 141–161 (TSAVICVLLWALSLLFPALQM). Over 162-180 (EKCSVLFNTFEYSWCGIIN) the chain is Extracellular. A helical transmembrane segment spans residues 181 to 201 (IISGAWLVVLFVVLCGFSLIL). At 202-220 (LLRISCGSQQIPVTRLNVT) the chain is on the cytoplasmic side. Residues 221 to 241 (IALRVLLLLIFGIPFGIFWIV) form a helical membrane-spanning segment. Residues 242 to 259 (DKWNEENFFVRACGFSHH) lie on the Extracellular side of the membrane. The chain crosses the membrane as a helical span at residues 260–280 (ILYVYCINICVNATIYFLVGS). The Cytoplasmic segment spans residues 281 to 312 (IRHGKFQKMTLKLILQRAIQGTPEEEGGERGP).

This sequence belongs to the G-protein coupled receptor 1 family. Mas subfamily.

It is found in the membrane. Its function is as follows. Orphan receptor. Probably involved in the function of nociceptive neurons. May regulate nociceptor function and/or development, including the sensation or modulation of pain. The chain is Mas-related G-protein coupled receptor member B3 (Mrgprb3) from Mus musculus (Mouse).